A 206-amino-acid chain; its full sequence is Cytochrome c oxidase assembly protein CtaG (206 aa).

The Cytoplasmic segment spans residues 1–22; it reads MTEQPTNRNDVPRRGLGRDATV. Residues 23 to 43 form a helical; Signal-anchor for type II membrane protein membrane-spanning segment; sequence ASICGLVVALMVGASYAAVPF. The Periplasmic portion of the chain corresponds to 44 to 206; that stretch reads YNWFCRATGF…GEPDSRKGAL (163 aa).

The protein belongs to the COX11/CtaG family.

The protein localises to the cell inner membrane. Exerts its effect at some terminal stage of cytochrome c oxidase synthesis, probably by being involved in the insertion of the copper B into subunit I. This Rhodopseudomonas palustris (strain BisB18) protein is Cytochrome c oxidase assembly protein CtaG.